The following is a 332-amino-acid chain: Glycerol-3-phosphate dehydrogenase [NAD(P)+] (332 aa).

Positions 13, 33, and 105 each coordinate NADPH. The sn-glycerol 3-phosphate site is built by K105, G134, and S136. A138 provides a ligand contact to NADPH. Positions 189, 242, 252, 253, and 254 each coordinate sn-glycerol 3-phosphate. K189 (proton acceptor) is an active-site residue. R253 provides a ligand contact to NADPH. E279 provides a ligand contact to NADPH.

Belongs to the NAD-dependent glycerol-3-phosphate dehydrogenase family.

It is found in the cytoplasm. The enzyme catalyses sn-glycerol 3-phosphate + NAD(+) = dihydroxyacetone phosphate + NADH + H(+). It catalyses the reaction sn-glycerol 3-phosphate + NADP(+) = dihydroxyacetone phosphate + NADPH + H(+). Its pathway is membrane lipid metabolism; glycerophospholipid metabolism. Functionally, catalyzes the reduction of the glycolytic intermediate dihydroxyacetone phosphate (DHAP) to sn-glycerol 3-phosphate (G3P), the key precursor for phospholipid synthesis. The sequence is that of Glycerol-3-phosphate dehydrogenase [NAD(P)+] from Halorhodospira halophila (strain DSM 244 / SL1) (Ectothiorhodospira halophila (strain DSM 244 / SL1)).